A 148-amino-acid polypeptide reads, in one-letter code: UPF0756 membrane protein YeaL (148 aa).

The next 4 membrane-spanning stretches (helical) occupy residues 14-34 (ALGF…LIIV), 51-71 (LSIG…SGTL), 86-106 (LVAI…VTLM), and 121-141 (VLGV…AGLV).

The protein belongs to the UPF0756 family.

It is found in the cell membrane. This Shigella boydii serotype 18 (strain CDC 3083-94 / BS512) protein is UPF0756 membrane protein YeaL.